Here is a 438-residue protein sequence, read N- to C-terminus: Histidinol dehydrogenase (438 aa).

3 residues coordinate NAD(+): Tyr129, Gln193, and Asn216. Substrate is bound by residues Thr239, Gln261, and His264. Zn(2+) contacts are provided by Gln261 and His264. Residues Glu330 and His331 each act as proton acceptor in the active site. 4 residues coordinate substrate: His331, Asp364, Glu418, and His423. Asp364 provides a ligand contact to Zn(2+). His423 serves as a coordination point for Zn(2+).

This sequence belongs to the histidinol dehydrogenase family. Zn(2+) is required as a cofactor.

It catalyses the reaction L-histidinol + 2 NAD(+) + H2O = L-histidine + 2 NADH + 3 H(+). It participates in amino-acid biosynthesis; L-histidine biosynthesis; L-histidine from 5-phospho-alpha-D-ribose 1-diphosphate: step 9/9. Functionally, catalyzes the sequential NAD-dependent oxidations of L-histidinol to L-histidinaldehyde and then to L-histidine. The chain is Histidinol dehydrogenase from Thermobifida fusca (strain YX).